The chain runs to 60 residues: Conotoxin VnMRCL-012 (60 aa).

A signal peptide spans 1–22 (MRCLPVFVILLLLIASAPGVDA). The propeptide occupies 23–50 (QPKTKYDVPLASRHDFAKKTPKRLSKPR).

The protein belongs to the conotoxin T superfamily. Contains 2 disulfide bonds that can be either 'C1-C3, C2-C4' or 'C1-C4, C2-C3', since these disulfide connectivities have been observed for conotoxins with cysteine framework V (for examples, see AC P0DQQ7 and AC P81755). Expressed by the venom duct.

The protein localises to the secreted. This Conus ventricosus (Mediterranean cone) protein is Conotoxin VnMRCL-012.